The chain runs to 198 residues: Recombination protein RecR (198 aa).

The C4-type zinc-finger motif lies at 56–71; the sequence is CDICGNVSEEPTCRIC. In terms of domain architecture, Toprim spans 79-175; sequence AVVCVVEEPK…NVTRLASGLP (97 aa).

Belongs to the RecR family.

Functionally, may play a role in DNA repair. It seems to be involved in an RecBC-independent recombinational process of DNA repair. It may act with RecF and RecO. The polypeptide is Recombination protein RecR (Saccharopolyspora erythraea (strain ATCC 11635 / DSM 40517 / JCM 4748 / NBRC 13426 / NCIMB 8594 / NRRL 2338)).